The sequence spans 611 residues: V-type proton ATPase catalytic subunit A (611 aa).

Residue 244-251 (GAFGCGKT) participates in ATP binding.

Belongs to the ATPase alpha/beta chains family. In terms of assembly, V-ATPase is a heteromultimeric enzyme made up of two complexes: the ATP-hydrolytic V1 complex and the proton translocation V0 complex. The V1 complex consists of three catalytic AB heterodimers that form a heterohexamer, three peripheral stalks each consisting of EG heterodimers, one central rotor including subunits D and F, and the regulatory subunits C and H. The proton translocation complex V0 consists of the proton transport subunit a, a ring of proteolipid subunits c9c'', rotary subunit d and subunit e.

It is found in the cell membrane. The protein resides in the vacuole. Its subcellular location is the vesicle. The catalysed reaction is ATP + H2O + 4 H(+)(in) = ADP + phosphate + 5 H(+)(out). ATP hydrolysis occurs at the interface between the nucleotide-binding domains of subunits A and B. ATP hydrolysis triggers a conformational change in the subunits D and F, which induces a shift of subunit d. The c-ring is subsequently rotated and results in a continuous proton translocation across the membrane. Catalytic subunit of the V1 complex of vacuolar(H+)-ATPase (V-ATPase), a multisubunit enzyme composed of a peripheral complex (V1) that hydrolyzes ATP and a membrane integral complex (V0) that translocates protons. V-ATPase is responsible for acidifying and maintaining the pH of intracellular compartments and in some cell types, is targeted to the plasma membrane, where it is responsible for acidifying the extracellular environment. During the trophozoite stage, involved in the acidification of the extracellular space next to the cell membrane. This chain is V-type proton ATPase catalytic subunit A, found in Plasmodium falciparum (isolate 3D7).